The following is a 183-amino-acid chain: Adenine phosphoribosyltransferase (183 aa).

The protein belongs to the purine/pyrimidine phosphoribosyltransferase family. In terms of assembly, homodimer.

The protein resides in the cytoplasm. The enzyme catalyses AMP + diphosphate = 5-phospho-alpha-D-ribose 1-diphosphate + adenine. It functions in the pathway purine metabolism; AMP biosynthesis via salvage pathway; AMP from adenine: step 1/1. Catalyzes a salvage reaction resulting in the formation of AMP, that is energically less costly than de novo synthesis. This Corynebacterium kroppenstedtii (strain DSM 44385 / JCM 11950 / CIP 105744 / CCUG 35717) protein is Adenine phosphoribosyltransferase.